Consider the following 299-residue polypeptide: Type II restriction enzyme BglI (299 aa).

Residues Asp-116, Asp-142, and Ile-143 each coordinate Mg(2+).

As to quaternary structure, homodimer. Mg(2+) serves as cofactor.

The catalysed reaction is Endonucleolytic cleavage of DNA to give specific double-stranded fragments with terminal 5'-phosphates.. Functionally, a P subtype restriction enzyme that recognizes the double-stranded sequence 5'-GCCNNNNNGGC-3' and cleaves before N-8. This chain is Type II restriction enzyme BglI (bglIR), found in Bacillus subtilis.